A 49-amino-acid polypeptide reads, in one-letter code: Large ribosomal subunit protein bL33A (49 aa).

Belongs to the bacterial ribosomal protein bL33 family.

The chain is Large ribosomal subunit protein bL33A from Limosilactobacillus reuteri subsp. reuteri (strain JCM 1112) (Lactobacillus reuteri).